The chain runs to 61 residues: Calprismin (61 aa).

In terms of processing, glycosylated. As to expression, expressed by the calcifying mantle epithelium and incorporated into the shell's calcitic prismatic layer.

This is Calprismin from Pinna nobilis (Noble pen shell).